The chain runs to 463 residues: Argininosuccinate lyase (463 aa).

Belongs to the lyase 1 family. Argininosuccinate lyase subfamily.

Its subcellular location is the cytoplasm. The enzyme catalyses 2-(N(omega)-L-arginino)succinate = fumarate + L-arginine. It participates in amino-acid biosynthesis; L-arginine biosynthesis; L-arginine from L-ornithine and carbamoyl phosphate: step 3/3. The sequence is that of Argininosuccinate lyase from Methylorubrum extorquens (strain CM4 / NCIMB 13688) (Methylobacterium extorquens).